The chain runs to 374 residues: C-X-C chemokine receptor type 5 (374 aa).

Over 1-57 the chain is Extracellular; it reads MNYPLTLDMGSITYNMDDLYKELAFYSNSTEIPLQDSNFCSTVEGPLLTSFKAVFMP. A glycan (N-linked (GlcNAc...) asparagine) is linked at N28. A helical transmembrane segment spans residues 58–78; it reads VAYSLIFLLGMMGNILVLVIL. The Cytoplasmic segment spans residues 79–90; the sequence is ERHRHTRSSTET. A helical membrane pass occupies residues 91-111; it reads FLFHLAVADLLLVFILPFAVA. The Extracellular segment spans residues 112-126; that stretch reads EGSVGWVLGTFLCKT. C124 and C204 are oxidised to a cystine. The helical transmembrane segment at 127–147 threads the bilayer; it reads VIALHKINFYCSSLLLACIAV. Over 148-169 the chain is Cytoplasmic; it reads DRYLAIVHAVHAYRRRRLLSIH. A helical transmembrane segment spans residues 170-190; it reads ITCTAIWLAGFLFALPELLFA. The Extracellular portion of the chain corresponds to 191–221; the sequence is KVGQPHNNDSLPQCTFSQENEAETRAWFTSR. The N-linked (GlcNAc...) asparagine glycan is linked to N198. A helical membrane pass occupies residues 222–242; it reads FLYHIGGFLLPMLVMGWCYVG. The Cytoplasmic portion of the chain corresponds to 243-261; sequence VVHRLLQAQRRPQRQKAVR. The chain crosses the membrane as a helical span at residues 262-282; that stretch reads VAILVTSIFFLCWSPYHIVIF. Residues 283-306 lie on the Extracellular side of the membrane; the sequence is LDTLERLKAVNSSCELSGYLSVAI. Residues 307 to 327 form a helical membrane-spanning segment; sequence TLCEFLGLAHCCLNPMLYTFA. The Cytoplasmic segment spans residues 328-374; sequence GVKFRSDLSRLLTKLGCAGPASLCQLFPNWRKSSLSESENATSLTTF.

Belongs to the G-protein coupled receptor 1 family. Mainly in spleen, in resting B-cells.

The protein resides in the cell membrane. Functionally, cytokine receptor that binds to B-lymphocyte chemoattractant (BLC). Involved in B-cell migration into B-cell follicles of spleen and Peyer patches but not into those of mesenteric or peripheral lymph nodes. This is C-X-C chemokine receptor type 5 (Cxcr5) from Mus musculus (Mouse).